The primary structure comprises 163 residues: MTNNDTTLQLSSVLNRECTRSRVHCQSKKRALEIISELAAKQLSLPPQVVFEAILTREKMGSTGIGNGIAIPHGKLEEDTLRAVGVFVQLETPIAFDAIDNQPVDLLFALLVPADQTKTHLHTLSLVAKRLADKTICRRLRAAQSDEELYQIITDTEGTPDEA.

In terms of domain architecture, PTS EIIA type-2 spans 12-156 (SVLNRECTRS…EELYQIITDT (145 aa)). His-73 serves as the catalytic Tele-phosphohistidine intermediate.

Its subcellular location is the cytoplasm. In terms of biological role, seems to have a role in regulating nitrogen assimilation. The polypeptide is Nitrogen regulatory protein (ptsN) (Escherichia coli (strain K12)).